We begin with the raw amino-acid sequence, 1637 residues long: Endoribonuclease Dicer homolog 3b (1637 aa).

The segment at 1–40 (MADDEAAVLPPPPPLPPPCRPHRQLRPRGSRPTADTTPRT) is disordered. Residues 9 to 19 (LPPPPPLPPPC) show a composition bias toward pro residues. The segment covering 20-29 (RPHRQLRPRG) has biased composition (basic residues). Positions 46 to 222 (VFEAALRGNT…LHNCEAHISQ (177 aa)) constitute a Helicase ATP-binding domain. 59-66 (LDTGSGKT) lines the ATP pocket. The short motif at 169–172 (DECH) is the DECH box element. A Helicase C-terminal domain is found at 404 to 556 (SFGSSNEVLC…ALYRHPNALS (153 aa)). The 91-residue stretch at 581-671 (CVNLIRKYCE…VPLTEEPMDT (91 aa)) folds into the Dicer dsRNA-binding fold domain. In terms of domain architecture, PAZ spans 882 to 1006 (EIIHLANKSL…VPPELLIHLD (125 aa)). The RNase III 1 domain occupies 1031-1200 (ASQLRREIGY…LVGAYYVGGG (170 aa)). Mg(2+) contacts are provided by Asp-1214, Asp-1309, and Ser-1312. In terms of domain architecture, RNase III 2 spans 1241–1389 (IEELEAKLKY…IAGAVFIDTD (149 aa)). 2 consecutive DRBM domains span residues 1412 to 1481 (LALP…DLKQ) and 1545 to 1629 (GPRS…KLQE).

Belongs to the helicase family. Dicer subfamily. May interact with ARGONAUTE1 or PINHEAD through their common PAZ domains. Mg(2+) is required as a cofactor. The cofactor is Mn(2+).

The protein resides in the nucleus. Functionally, probably involved in the RNA silencing pathway. May cleave double-stranded RNA to produce short 21-24 nucleotides (nt) RNAs which target the selective destruction of complementary RNAs. The polypeptide is Endoribonuclease Dicer homolog 3b (DCL3B) (Oryza sativa subsp. japonica (Rice)).